The chain runs to 336 residues: Holliday junction branch migration complex subunit RuvB (336 aa).

The interval 4 to 184 (ADRLISAGAT…FGIVQRLEFY (181 aa)) is large ATPase domain (RuvB-L). ATP is bound by residues Ile23, Arg24, Gly65, Lys68, Thr69, Thr70, 131 to 133 (EDY), Arg174, Tyr184, and Arg221. Thr69 serves as a coordination point for Mg(2+). The interval 185–255 (QVPDLQHIVG…IAAQALDMLN (71 aa)) is small ATPAse domain (RuvB-S). A head domain (RuvB-H) region spans residues 258–336 (AEGFDYMDRK…HFGITPPEMP (79 aa)). The DNA site is built by Arg294, Arg313, and Arg318.

This sequence belongs to the RuvB family. Homohexamer. Forms an RuvA(8)-RuvB(12)-Holliday junction (HJ) complex. HJ DNA is sandwiched between 2 RuvA tetramers; dsDNA enters through RuvA and exits via RuvB. An RuvB hexamer assembles on each DNA strand where it exits the tetramer. Each RuvB hexamer is contacted by two RuvA subunits (via domain III) on 2 adjacent RuvB subunits; this complex drives branch migration. In the full resolvosome a probable DNA-RuvA(4)-RuvB(12)-RuvC(2) complex forms which resolves the HJ.

Its subcellular location is the cytoplasm. The enzyme catalyses ATP + H2O = ADP + phosphate + H(+). Its function is as follows. The RuvA-RuvB-RuvC complex processes Holliday junction (HJ) DNA during genetic recombination and DNA repair, while the RuvA-RuvB complex plays an important role in the rescue of blocked DNA replication forks via replication fork reversal (RFR). RuvA specifically binds to HJ cruciform DNA, conferring on it an open structure. The RuvB hexamer acts as an ATP-dependent pump, pulling dsDNA into and through the RuvAB complex. RuvB forms 2 homohexamers on either side of HJ DNA bound by 1 or 2 RuvA tetramers; 4 subunits per hexamer contact DNA at a time. Coordinated motions by a converter formed by DNA-disengaged RuvB subunits stimulates ATP hydrolysis and nucleotide exchange. Immobilization of the converter enables RuvB to convert the ATP-contained energy into a lever motion, pulling 2 nucleotides of DNA out of the RuvA tetramer per ATP hydrolyzed, thus driving DNA branch migration. The RuvB motors rotate together with the DNA substrate, which together with the progressing nucleotide cycle form the mechanistic basis for DNA recombination by continuous HJ branch migration. Branch migration allows RuvC to scan DNA until it finds its consensus sequence, where it cleaves and resolves cruciform DNA. The chain is Holliday junction branch migration complex subunit RuvB from Salmonella agona (strain SL483).